A 105-amino-acid polypeptide reads, in one-letter code: Nitrogenase-stabilizing/protective protein NifW (105 aa).

This sequence belongs to the NifW family. In terms of assembly, homotrimer; associates with NifD.

In terms of biological role, may protect the nitrogenase Fe-Mo protein from oxidative damage. The protein is Nitrogenase-stabilizing/protective protein NifW of Nostoc punctiforme (strain ATCC 29133 / PCC 73102).